The sequence spans 854 residues: MAHTGSTVCAFLIFAVLKNVFCQTPTSSSEVEDVIPEANTVSDNIIRQQRNNTAKGIHSDPSAFPFRVCSASNIGDIFRFQTSHSCPNTKDKEHNEGILLIFKENIVPYVFKVRKYRKIVTTSTIYNGIYADAVTNQHVFSKSVPIYETRRMDTIYQCYNSLDVTVGGNLLVYTDNDGSNMTVDLQPVDGLSNSVRRYHSQPEIHAEPGWLLGGYRRRTTVNCEVTETDARAVPPFRYFITNIGDTIEMSPFWSKAWNETEFSGEPDRTLTVAKDYRVVDYKFRGTQPQGHTRIFVDKEEYTLSWAQQFRNISYCRWAHWKSFDNAIKTEHGKSLHFVANDITASFYTPNTQTREVLGKHVCLNNTIESELKSRLAKVNDTHSPNGTAQYYLTNGGLLLVWQPLVQQKLLDAKGLLDAVKKQQNTTTTTTTTRSRRQRRSVSSGIDDVYTAESTILLTQIQFAYDTLRAQINNVLEELSRAWCREQHRASLMWNELSKINPTSVMSSIYGRPVSAKRIGDVISVSHCVVVDQDSVSLHRSMRVPGRDKTHECYSRPPVTFKFINDSHLYKGQLGVNNEILLTTTAVEICHENTEHYFQGGNNMYFYKNYRHVKTMPVGDVATLDTFMVLNLTLVENIDFQVIELYSREEKRMSTAFDIETMFREYNYYTQRVTGLRRDLTDLATNRNQFVDAFGSLMDDLGVVGKTVLNAVSSVATLFSSIVSGIINFIKNPFGGMLLFGLIAAVVITVILLNRKAKRFAQNPVQMIYPDIKTITSQREELQVDPISKHELDRIMLAMHDYHASKQPESKQDEEQGSTTSGPADWLNKAKNVLRRRAGYKPLKRTDSFESTGVP.

A signal peptide spans 1 to 22 (MAHTGSTVCAFLIFAVLKNVFC). Residues 23 to 732 (QTPTSSSEVE…SGIINFIKNP (710 aa)) lie on the Virion surface side of the membrane. Asparagine 51 carries N-linked (GlcNAc...) asparagine; by host glycosylation. Intrachain disulfides connect cysteine 69–cysteine 527, cysteine 86–cysteine 483, cysteine 158–cysteine 223, cysteine 315–cysteine 362, and cysteine 552–cysteine 589. Residues 125 to 131 (IYNGIYA) form an involved in fusion and/or binding to host membrane region. Asparagine 180 carries N-linked (GlcNAc...) asparagine; by host glycosylation. The involved in fusion and/or binding to host membrane stretch occupies residues 209 to 217 (GWLLGGYRR). N-linked (GlcNAc...) asparagine; by host glycans are attached at residues asparagine 258 and asparagine 311. N-linked (GlcNAc...) asparagine; by host glycosylation is found at asparagine 364, asparagine 379, asparagine 385, asparagine 424, asparagine 564, and asparagine 630. A disordered region spans residues 422–443 (QQNTTTTTTTTRSRRQRRSVSS). The tract at residues 679–730 (LTDLATNRNQFVDAFGSLMDDLGVVGKTVLNAVSSVATLFSSIVSGIINFIK) is hydrophobic membrane proximal region. The chain crosses the membrane as a helical span at residues 733–753 (FGGMLLFGLIAAVVITVILLN). The Intravirion portion of the chain corresponds to 754–854 (RKAKRFAQNP…TDSFESTGVP (101 aa)). Positions 802–813 (HASKQPESKQDE) are enriched in basic and acidic residues. The tract at residues 802 to 829 (HASKQPESKQDEEQGSTTSGPADWLNKA) is disordered. Residues 839-842 (YKPL) carry the Internalization motif motif.

It belongs to the herpesviridae glycoprotein B family. As to quaternary structure, homotrimer; disulfide-linked. Binds to heparan sulfate proteoglycans. Interacts with gH/gL heterodimer. In terms of processing, a proteolytic cleavage by host furin generates two subunits that remain linked by disulfide bonds.

It is found in the virion membrane. Its subcellular location is the host cell membrane. It localises to the host endosome membrane. The protein resides in the host Golgi apparatus membrane. Envelope glycoprotein that forms spikes at the surface of virion envelope. Essential for the initial attachment to heparan sulfate moieties of the host cell surface proteoglycans. Involved in fusion of viral and cellular membranes leading to virus entry into the host cell. Following initial binding to its host receptors, membrane fusion is mediated by the fusion machinery composed at least of gB and the heterodimer gH/gL. May be involved in the fusion between the virion envelope and the outer nuclear membrane during virion egress. This is Envelope glycoprotein B from Connochaetes taurinus (Blue wildebeest).